A 265-amino-acid chain; its full sequence is tRNA pseudouridine synthase A (265 aa).

Asp58 (nucleophile) is an active-site residue. Residue Tyr116 coordinates substrate.

It belongs to the tRNA pseudouridine synthase TruA family. As to quaternary structure, homodimer.

The catalysed reaction is uridine(38/39/40) in tRNA = pseudouridine(38/39/40) in tRNA. Formation of pseudouridine at positions 38, 39 and 40 in the anticodon stem and loop of transfer RNAs. The sequence is that of tRNA pseudouridine synthase A from Neisseria meningitidis serogroup C (strain 053442).